We begin with the raw amino-acid sequence, 216 residues long: MSCSSALDCFIKNYLKSYQDTLSEFPRYYPLGEDSICIQGTFNADTDDTVFWQPVKRDNVADFSNVEHALNIQLHQDIHAFYGQYFSAPLPFTASFGDGELLQAWNQDDFENLQQNVIGHLIMKKKLKQPATWFIGVLGEGDEMLTVNNDDGSVWIEIPGEKQRTKLAESLTEFLESLSPMIKPPSKPVEELPHTVDHPGIWQRIKTMWDYLLRKK.

The protein belongs to the Syd family.

Its subcellular location is the cell inner membrane. Functionally, interacts with the SecY protein in vivo. May bind preferentially to an uncomplexed state of SecY, thus functioning either as a chelating agent for excess SecY in the cell or as a regulatory factor that negatively controls the translocase function. This chain is Protein Syd, found in Shewanella frigidimarina (strain NCIMB 400).